The sequence spans 159 residues: Globin CTT-W (159 aa).

Positions 1-16 are cleaved as a signal peptide; it reads MKFLVILTLCIAGAIA. Residues 17 to 159 enclose the Globin domain; the sequence is HCDKAPFIKA…HHAIVYSILE (143 aa). 2 residues coordinate heme b: H73 and H108.

It belongs to the globin family.

This is Globin CTT-W (CTT-W) from Chironomus thummi thummi (Midge).